A 282-amino-acid polypeptide reads, in one-letter code: Nucleotide-binding protein XCC2806 (282 aa).

An ATP-binding site is contributed by 5–12 (GLSGSGKS). Residue 57 to 60 (DVRS) participates in GTP binding.

It belongs to the RapZ-like family.

Its function is as follows. Displays ATPase and GTPase activities. This chain is Nucleotide-binding protein XCC2806, found in Xanthomonas campestris pv. campestris (strain ATCC 33913 / DSM 3586 / NCPPB 528 / LMG 568 / P 25).